Consider the following 258-residue polypeptide: Immediate-early protein IE-0 (258 aa).

The segment at 191–237 adopts an RING-type zinc-finger fold; it reads CNICEDSSAEEQFLKPNVCCGYRVCNACYAKLWEFCTGAYPVCPICK.

The sequence is that of Immediate-early protein IE-0 (IE-0) from Lymantria dispar multicapsid nuclear polyhedrosis virus (LdMNPV).